A 428-amino-acid chain; its full sequence is Trigger factor (428 aa).

The region spanning 163-248 (GDTAVIDFEG…IKEIKVKELP (86 aa)) is the PPIase FKBP-type domain.

The protein belongs to the FKBP-type PPIase family. Tig subfamily.

Its subcellular location is the cytoplasm. The catalysed reaction is [protein]-peptidylproline (omega=180) = [protein]-peptidylproline (omega=0). Involved in protein export. Acts as a chaperone by maintaining the newly synthesized protein in an open conformation. Functions as a peptidyl-prolyl cis-trans isomerase. The sequence is that of Trigger factor from Ruminiclostridium cellulolyticum (strain ATCC 35319 / DSM 5812 / JCM 6584 / H10) (Clostridium cellulolyticum).